The chain runs to 93 residues: Acyl carrier protein AcpXL (93 aa).

Residues 2 to 88 (SSTFDKVADI…NLCAKIDELV (87 aa)) form the Carrier domain. S37 bears the O-(pantetheine 4'-phosphoryl)serine mark.

Post-translationally, 4'-phosphopantetheine is transferred from CoA to a specific serine of apo-ACP by AcpS. This modification is essential for activity because fatty acids are bound in thioester linkage to the sulfhydryl of the prosthetic group.

The protein resides in the cytoplasm. Its pathway is glycolipid biosynthesis; KDO(2)-lipid A biosynthesis. Its function is as follows. Carrier of the growing fatty acid chain in fatty acid biosynthesis. Is involved in the transfer of long hydroxylated fatty acids to lipid A. This is Acyl carrier protein AcpXL (acpXL) from Brucella melitensis biotype 1 (strain ATCC 23456 / CCUG 17765 / NCTC 10094 / 16M).